The following is a 696-amino-acid chain: Polyribonucleotide nucleotidyltransferase (696 aa).

Mg(2+)-binding residues include Asp-483 and Asp-489. A KH domain is found at 550–609 (PRITTIYVKTDKIRDVIGSGGKNIRGITEATGVTIDIDDTGKINIASTDKAACDLAIKMI). An S1 motif domain is found at 619–687 (GKLYMGLVKK…KQGKIKLSRK (69 aa)).

Belongs to the polyribonucleotide nucleotidyltransferase family. Mg(2+) serves as cofactor.

Its subcellular location is the cytoplasm. It catalyses the reaction RNA(n+1) + phosphate = RNA(n) + a ribonucleoside 5'-diphosphate. Involved in mRNA degradation. Catalyzes the phosphorolysis of single-stranded polyribonucleotides processively in the 3'- to 5'-direction. This is Polyribonucleotide nucleotidyltransferase from Geotalea uraniireducens (strain Rf4) (Geobacter uraniireducens).